The following is a 268-amino-acid chain: 3-methyl-2-oxobutanoate hydroxymethyltransferase (268 aa).

Residues Asp-41 and Asp-80 each contribute to the Mg(2+) site. Residues 41-42 (DS), Asp-80, and Lys-110 contribute to the 3-methyl-2-oxobutanoate site. Glu-112 serves as a coordination point for Mg(2+). Residue Glu-178 is the Proton acceptor of the active site.

It belongs to the PanB family. Homodecamer; pentamer of dimers. Mg(2+) serves as cofactor.

Its subcellular location is the cytoplasm. It carries out the reaction 3-methyl-2-oxobutanoate + (6R)-5,10-methylene-5,6,7,8-tetrahydrofolate + H2O = 2-dehydropantoate + (6S)-5,6,7,8-tetrahydrofolate. The protein operates within cofactor biosynthesis; coenzyme A biosynthesis. Its function is as follows. Catalyzes the reversible reaction in which hydroxymethyl group from 5,10-methylenetetrahydrofolate is transferred onto alpha-ketoisovalerate to form ketopantoate. This is 3-methyl-2-oxobutanoate hydroxymethyltransferase from Natronomonas pharaonis (strain ATCC 35678 / DSM 2160 / CIP 103997 / JCM 8858 / NBRC 14720 / NCIMB 2260 / Gabara) (Halobacterium pharaonis).